We begin with the raw amino-acid sequence, 353 residues long: Photosystem II D2 protein (353 aa).

N-acetylthreonine is present on Thr2. Position 2 is a phosphothreonine (Thr2). The helical transmembrane segment at 41-61 (CAYFALGGWFTGTTFVTSWYT) threads the bilayer. Residue His118 coordinates chlorophyll a. A helical membrane pass occupies residues 125-141 (GFMLRQFELARSVQLRP). Positions 130 and 143 each coordinate pheophytin a. Residues 153-166 (VFVSVFLIYPLGQS) traverse the membrane as a helical segment. Chlorophyll a is bound at residue His198. Residues 208-228 (AALLCAIHGATVENTLFEDGD) traverse the membrane as a helical segment. Positions 215 and 262 each coordinate a plastoquinone. His215 is a binding site for Fe cation. His269 contributes to the Fe cation binding site. A helical transmembrane segment spans residues 279-295 (GLWMSALGVVGLALNLR).

Belongs to the reaction center PufL/M/PsbA/D family. PSII is composed of 1 copy each of membrane proteins PsbA, PsbB, PsbC, PsbD, PsbE, PsbF, PsbH, PsbI, PsbJ, PsbK, PsbL, PsbM, PsbT, PsbX, PsbY, PsbZ, Psb30/Ycf12, at least 3 peripheral proteins of the oxygen-evolving complex and a large number of cofactors. It forms dimeric complexes. The D1/D2 heterodimer binds P680, chlorophylls that are the primary electron donor of PSII, and subsequent electron acceptors. It shares a non-heme iron and each subunit binds pheophytin, quinone, additional chlorophylls, carotenoids and lipids. There is also a Cl(-1) ion associated with D1 and D2, which is required for oxygen evolution. The PSII complex binds additional chlorophylls, carotenoids and specific lipids. serves as cofactor.

It is found in the plastid. It localises to the chloroplast thylakoid membrane. The enzyme catalyses 2 a plastoquinone + 4 hnu + 2 H2O = 2 a plastoquinol + O2. Functionally, photosystem II (PSII) is a light-driven water:plastoquinone oxidoreductase that uses light energy to abstract electrons from H(2)O, generating O(2) and a proton gradient subsequently used for ATP formation. It consists of a core antenna complex that captures photons, and an electron transfer chain that converts photonic excitation into a charge separation. The D1/D2 (PsbA/PsbD) reaction center heterodimer binds P680, the primary electron donor of PSII as well as several subsequent electron acceptors. D2 is needed for assembly of a stable PSII complex. This is Photosystem II D2 protein from Dioscorea elephantipes (Elephant's foot yam).